Consider the following 189-residue polypeptide: Potassium-transporting ATPase KdpC subunit (189 aa).

A helical membrane pass occupies residues 6–26; sequence PAILLFIMFTIICGGIYPALV.

The protein belongs to the KdpC family. The system is composed of three essential subunits: KdpA, KdpB and KdpC.

The protein localises to the cell inner membrane. In terms of biological role, part of the high-affinity ATP-driven potassium transport (or Kdp) system, which catalyzes the hydrolysis of ATP coupled with the electrogenic transport of potassium into the cytoplasm. This subunit acts as a catalytic chaperone that increases the ATP-binding affinity of the ATP-hydrolyzing subunit KdpB by the formation of a transient KdpB/KdpC/ATP ternary complex. The polypeptide is Potassium-transporting ATPase KdpC subunit (Trichlorobacter lovleyi (strain ATCC BAA-1151 / DSM 17278 / SZ) (Geobacter lovleyi)).